Consider the following 469-residue polypeptide: Diaminobutyrate--2-oxoglutarate transaminase (469 aa).

K290 bears the N6-(pyridoxal phosphate)lysine mark.

Belongs to the class-III pyridoxal-phosphate-dependent aminotransferase family. It depends on pyridoxal 5'-phosphate as a cofactor.

The protein localises to the cytoplasm. The enzyme catalyses L-2,4-diaminobutanoate + 2-oxoglutarate = L-aspartate 4-semialdehyde + L-glutamate. Functionally, involved in the degradation of ectoine, which allows H.elongata to utilize ectoine as both a carbon and a nitrogen source for growth. Probably catalyzes the conversion of L-2,4-diaminobutyrate (DABA) to L-aspartate beta-semialdehyde (ASA) by transamination with 2-oxoglutarate. This chain is Diaminobutyrate--2-oxoglutarate transaminase, found in Halomonas elongata (strain ATCC 33173 / DSM 2581 / NBRC 15536 / NCIMB 2198 / 1H9).